Here is an 807-residue protein sequence, read N- to C-terminus: Zinc finger protein 594 (807 aa).

Residues 1-23 (MKEWKSKMEISEEKKSARAASEK) are disordered. 8 C2H2-type zinc fingers span residues 127–149 (YECKECEKTFNRSSNLIIHQRIH), 155–177 (YVCNECGKDSNQSSNLIIHQRIH), 183–205 (YICHECGKDFNQSSNLVRHKQIH), 211–233 (YECKECGKAFKGSSNLVLHQRIH), 239–261 (YLCNKCGKAFSQSTDLIIHHRIH), 267–289 (YECYDCGQMFSQSSHLVPHQRIH), 295–317 (LKCNECEKAFRQHSHLTEHQRLH), and 323–345 (YECHRCGKTFSGRTAFLKHQRLH). The segment at 348–370 (EKIEECEKTFSKDEELREEQRIH) adopts a C2H2-type 9; degenerate zinc-finger fold. 6 C2H2-type zinc fingers span residues 376-398 (YWCNQCGRNFQGTSDLIRHQVTH), 404-426 (YECKECGKTFNQSSDLLRHHRIH), 432-454 (CVCSKCGKSFRGSSDLIRHHRVH), 460-482 (YECSECGKAFSQRSHLVTHQKIH), 488-510 (YQCTECGKAFRRRSLLIQHRRIH), and 516-538 (YECKECGKLFIWRTAFLKHQSLH). The segment at 543–562 (LECEKTFSQDEELRGEQKIH) adopts a C2H2-type 16; degenerate zinc-finger fold. C2H2-type zinc fingers lie at residues 568–590 (YWCNQCGRAFQGSSDLIRHQVTH), 596–618 (YECKECGKTFNQSSDLLRHHRIH), 624–646 (YVCNKCGKSFRGSSDLIKHHRIH), 652–674 (YECSECGKAFSQRSHLATHQKIH), 680–702 (YQCSECGNAFRRRSLLIQHRRLH), and 708–730 (YECKECGKLFMWHTAFLKHQRLH). A C2H2-type 23; degenerate zinc finger spans residues 733–755 (EKLEECEKTFSKDEELRKEQRTH). Residues 761-783 (YWCNQCSRTFQGSSDLIRHQVTH) form a C2H2-type 24 zinc finger.

It belongs to the krueppel C2H2-type zinc-finger protein family.

It localises to the nucleus. In terms of biological role, may be involved in transcriptional regulation. In Homo sapiens (Human), this protein is Zinc finger protein 594 (ZNF594).